The sequence spans 155 residues: Fibroblast growth factor 2 (155 aa).

A propeptide spanning residues 1-9 is cleaved from the precursor; that stretch reads MAAGSITTL. Over residues 1–11 the composition is skewed to polar residues; the sequence is MAAGSITTLPT. A disordered region spans residues 1 to 24; that stretch reads MAAGSITTLPTESEDGGNTPFSPG. Heparin is bound by residues 27–31 and 116–119; these read KDPKR and RSRK.

The protein belongs to the heparin-binding growth factors family.

The protein resides in the secreted. It is found in the nucleus. Functionally, acts as a ligand for FGFR1, FGFR2, FGFR3 and FGFR4. Also acts as an integrin ligand which is required for FGF2 signaling. Plays an important role in the regulation of cell survival, cell division, cell differentiation and cell migration. Functions as a potent mitogen in vitro. Can induce angiogenesis. This is Fibroblast growth factor 2 (fgf2) from Xenopus laevis (African clawed frog).